The primary structure comprises 375 residues: Adiponectin receptor protein 1 (375 aa).

Residues Met-1 to Glu-60 form a disordered region. Over Met-1–Gly-136 the chain is Cytoplasmic. The chain crosses the membrane as a helical span at residues Asn-137–Leu-157. Over Arg-158–Lys-170 the chain is Extracellular. A helical transmembrane segment spans residues Val-171 to His-191. His-191 is a binding site for Zn(2+). Over Thr-192–Thr-203 the chain is Cytoplasmic. A helical transmembrane segment spans residues Phe-204–Leu-224. Residues Tyr-225–Pro-234 are Extracellular-facing. The chain crosses the membrane as a helical span at residues Arg-235 to Trp-255. Over Asp-256–Arg-264 the chain is Cytoplasmic. A helical membrane pass occupies residues Gln-265–Phe-285. Residues Thr-286–Gly-298 lie on the Extracellular side of the membrane. A helical transmembrane segment spans residues Gln-299–Ala-319. Residues Arg-320 to His-337 are Cytoplasmic-facing. Residues His-337 and His-341 each coordinate Zn(2+). The helical transmembrane segment at Gln-338 to Leu-358 threads the bilayer. The Extracellular portion of the chain corresponds to Gln-359 to Leu-375.

Belongs to the ADIPOR family. In terms of assembly, may form homooligomers and heterooligomers with ADIPOR2. Interacts with APPL2 (via BAR domain); hinders the accessibility of APPL1 to ADIPOR1; negatively regulates adiponectin signaling; ADIPOQ dissociates this interaction and facilitates the recruitment of APPL1 to ADIPOR1. Interacts with APPL1; ADIPOQ enhances this interaction; inhibites adiponectin-stimulated binding of APPL2 to ADIPOR1. As to expression, detected in brain and quadriceps muscle (at protein level). Widely expressed. Expressed in heart, kidney, liver, lung, skeletal muscle, white adipose tissue, brown adipose tissue, aorta and spleen. Weakly expressed in brain and testis.

Its subcellular location is the cell membrane. In terms of biological role, receptor for ADIPOQ, an essential hormone secreted by adipocytes that regulates glucose and lipid metabolism. Required for normal glucose and fat homeostasis and for maintaining a normal body weight. ADIPOQ-binding activates a signaling cascade that leads to increased AMPK activity, and ultimately to increased fatty acid oxidation, increased glucose uptake and decreased gluconeogenesis. Has high affinity for globular adiponectin and low affinity for full-length adiponectin. The protein is Adiponectin receptor protein 1 of Mus musculus (Mouse).